The sequence spans 1087 residues: Exportin-7-B (1087 aa).

The Importin N-terminal domain maps to 30–96 (AEKALVEFTN…RNYVLTYLAT (67 aa)).

It belongs to the exportin family.

The protein localises to the cytoplasm. It localises to the nucleus. Its function is as follows. Mediates the nuclear export of proteins (cargos) with broad substrate specificity. The polypeptide is Exportin-7-B (xpo7-b) (Xenopus laevis (African clawed frog)).